Here is a 118-residue protein sequence, read N- to C-terminus: MMEALLVATGGFFGAITRFAISNWFKKRTKTSFPIATFLINITGAFLLGYIIGNGVTTGWQLLLGTGFMGAFTTFSTFKLESIQLFNRKNLSILFLYLSATYIIGILFAFLGMQLGGI.

Helical transmembrane passes span 1–21, 33–53, 55–75, and 93–113; these read MMEA…RFAI, FPIA…YIIG, GVTT…FTTF, and ILFL…FLGM. Positions 70 and 73 each coordinate Na(+).

This sequence belongs to the fluoride channel Fluc/FEX (TC 1.A.43) family.

It is found in the cell membrane. The catalysed reaction is fluoride(in) = fluoride(out). Na(+) is not transported, but it plays an essential structural role and its presence is essential for fluoride channel function. Fluoride-specific ion channel. Important for reducing fluoride concentration in the cell, thus reducing its toxicity. The sequence is that of Fluoride-specific ion channel FluC 2 from Bacillus cereus (strain ATCC 10987 / NRS 248).